Reading from the N-terminus, the 148-residue chain is Urease accessory protein UreE (148 aa).

It belongs to the UreE family.

The protein resides in the cytoplasm. Its function is as follows. Involved in urease metallocenter assembly. Binds nickel. Probably functions as a nickel donor during metallocenter assembly. This is Urease accessory protein UreE from Aliarcobacter butzleri (strain RM4018) (Arcobacter butzleri).